Consider the following 255-residue polypeptide: Vitamin B12 import ATP-binding protein BtuD (255 aa).

The 239-residue stretch at 2-240 (MHVKHIALGS…EGLAEVFQTQ (239 aa)) folds into the ABC transporter domain. Residue 30–37 (GPNGSGKS) coordinates ATP.

This sequence belongs to the ABC transporter superfamily. Vitamin B12 importer (TC 3.A.1.13.1) family. The complex is composed of two ATP-binding proteins (BtuD), two transmembrane proteins (BtuC) and a solute-binding protein (BtuF).

It is found in the cell inner membrane. It catalyses the reaction an R-cob(III)alamin(out) + ATP + H2O = an R-cob(III)alamin(in) + ADP + phosphate + H(+). Its function is as follows. Part of the ABC transporter complex BtuCDF involved in vitamin B12 import. Responsible for energy coupling to the transport system. This is Vitamin B12 import ATP-binding protein BtuD from Vibrio campbellii (strain ATCC BAA-1116).